The chain runs to 168 residues: Tyrosine-protein phosphatase (168 aa).

A Tyrosine-protein phosphatase domain is found at 24–168; sequence FKTPLRPELF…RQNYVQDLLI (145 aa). C119 functions as the Phosphocysteine intermediate in the catalytic mechanism.

Belongs to the protein-tyrosine phosphatase family. Non-receptor class CDC14 subfamily.

The catalysed reaction is O-phospho-L-tyrosyl-[protein] + H2O = L-tyrosyl-[protein] + phosphate. Plays a role in the regulation and processing of late viral mRNAs by displaying RNA 5'-triphosphatase and diphosphatase activities. This Autographa californica nuclear polyhedrosis virus (AcMNPV) protein is Tyrosine-protein phosphatase (PTP).